Consider the following 318-residue polypeptide: Probable cell division protein WhiA (318 aa).

The H-T-H motif DNA-binding region spans 281-314 (SLKELGQMLVPPVGKSGVNHRLRKIEEISKKLKE).

This sequence belongs to the WhiA family.

Its function is as follows. Involved in cell division and chromosome segregation. The sequence is that of Probable cell division protein WhiA from Thermoanaerobacter pseudethanolicus (strain ATCC 33223 / 39E) (Clostridium thermohydrosulfuricum).